Consider the following 355-residue polypeptide: Dual-specificity RNA methyltransferase RlmN (355 aa).

Catalysis depends on E86, which acts as the Proton acceptor. One can recognise a Radical SAM core domain in the interval 105–338 (KEARYTVCVS…CTIRESKGLD (234 aa)). C112 and C343 are disulfide-bonded. [4Fe-4S] cluster-binding residues include C119, C123, and C126. S-adenosyl-L-methionine is bound by residues 169–170 (GE), S201, 224–226 (SLH), and N300. C343 serves as the catalytic S-methylcysteine intermediate.

This sequence belongs to the radical SAM superfamily. RlmN family. Requires [4Fe-4S] cluster as cofactor.

The protein localises to the cytoplasm. The catalysed reaction is adenosine(2503) in 23S rRNA + 2 reduced [2Fe-2S]-[ferredoxin] + 2 S-adenosyl-L-methionine = 2-methyladenosine(2503) in 23S rRNA + 5'-deoxyadenosine + L-methionine + 2 oxidized [2Fe-2S]-[ferredoxin] + S-adenosyl-L-homocysteine. The enzyme catalyses adenosine(37) in tRNA + 2 reduced [2Fe-2S]-[ferredoxin] + 2 S-adenosyl-L-methionine = 2-methyladenosine(37) in tRNA + 5'-deoxyadenosine + L-methionine + 2 oxidized [2Fe-2S]-[ferredoxin] + S-adenosyl-L-homocysteine. Its function is as follows. Specifically methylates position 2 of adenine 2503 in 23S rRNA and position 2 of adenine 37 in tRNAs. m2A2503 modification seems to play a crucial role in the proofreading step occurring at the peptidyl transferase center and thus would serve to optimize ribosomal fidelity. The chain is Dual-specificity RNA methyltransferase RlmN from Nitratiruptor sp. (strain SB155-2).